Reading from the N-terminus, the 362-residue chain is Serine/threonine-protein kinase ZRK4 (362 aa).

A disordered region spans residues 1 to 23; the sequence is MNDQKMSCWRKKSKKKNSEANQR. Residues 35–362 form the Protein kinase domain; sequence LEDLIELCNG…KELKRIERWT (328 aa). ATP contacts are provided by residues 41–49 and Lys-89; that span reads LCNGKSNPI. Asp-185 functions as the Proton acceptor in the catalytic mechanism.

This sequence belongs to the protein kinase superfamily. Ser/Thr protein kinase family. ZRK subfamily.

It carries out the reaction L-seryl-[protein] + ATP = O-phospho-L-seryl-[protein] + ADP + H(+). The enzyme catalyses L-threonyl-[protein] + ATP = O-phospho-L-threonyl-[protein] + ADP + H(+). This chain is Serine/threonine-protein kinase ZRK4, found in Arabidopsis thaliana (Mouse-ear cress).